The primary structure comprises 861 residues: ToMV resistance protein Tm-2(GCR236) (861 aa).

Residues 63–83 are a coiled coil; sequence VKNLLKDIQELAGDVEDLLDD. Residues 162 to 388 form the NB-ARC domain; the sequence is DDFNMLQAKL…LESMGHKVQD (227 aa). 185 to 192 serves as a coordination point for ATP; that stretch reads GMPGLGKT. LRR repeat units follow at residues 225 to 248, 305 to 327, 388 to 411, 449 to 472, 510 to 536, 585 to 608, 609 to 631, 652 to 680, 689 to 710, 712 to 735, 736 to 758, 784 to 810, and 811 to 835; these read LDIA…NLRS, LHAL…IFNF, DGCA…CFLY, LAED…TYNG, VARL…KLEK, MTCL…IVKL, TRLE…VWES, ISSF…FFEP, LRKL…IFSP, LKAL…LSSY, PHIA…SFPP, LRKL…GYSF, and PQLE…DVSM.

Belongs to the disease resistance NB-LRR family. As to quaternary structure, (Microbial infection) Interacts with tobamoviruses mouvement protein at the plasma membrane; this interaction triggers defense responses leading to programmed cell death. Binds to HSP90 proteins; this interaction seems required for defense responses toward tobamoviruses.

It localises to the cell membrane. Inhibitor of viral mouvements which confers resistance to some tobamoviruses including tomato mosaic virus (ToMV) (e.g. isolates L, W3 and SL-1) and tobacco mosaic virus (TMV), but not to resistance-breaking isolates (e.g. B7, LT1, LII, Ltbl, ToMV2, and ToMV1-2) ToMV and tomato brown rugose fruit virus (ToBRFV). Elicits a hypersensitive reaction in response to avirulent (Avr) movement proteins from resistance inducing tobamoviruses (e.g. ToMV and TMV) strains, thus leading to programmed cell death. This Solanum lycopersicum (Tomato) protein is ToMV resistance protein Tm-2(GCR236).